The primary structure comprises 503 residues: Cobyric acid synthase (503 aa).

The region spanning 251 to 450 (DLDIAVIRLP…IHGIFENAAF (200 aa)) is the GATase cobBQ-type domain. The active-site Nucleophile is C331. H442 is a catalytic residue.

The protein belongs to the CobB/CobQ family. CobQ subfamily.

It participates in cofactor biosynthesis; adenosylcobalamin biosynthesis. Functionally, catalyzes amidations at positions B, D, E, and G on adenosylcobyrinic A,C-diamide. NH(2) groups are provided by glutamine, and one molecule of ATP is hydrogenolyzed for each amidation. This is Cobyric acid synthase from Dehalococcoides mccartyi (strain CBDB1).